A 514-amino-acid chain; its full sequence is Voltage-gated potassium channel regulatory subunit KCNG1 (514 aa).

At 1–224 (MTLLPGDNSH…DMVERPHSGL (224 aa)) the chain is on the cytoplasmic side. Acidic residues predominate over residues 180 to 196 (MEREEEEEPLDSEDQES). Positions 180-205 (MEREEEEEPLDSEDQESEGPSASEGR) are disordered. The chain crosses the membrane as a helical span at residues 225-246 (PGKVFACLSVLFVTVTAVNLSV). Residues 247–267 (STLPSLREEEEQGQCSQMCHN) are Extracellular-facing. The helical transmembrane segment at 268–289 (VFIVESVCVGWFSLEFLLRFIQ) threads the bilayer. Topologically, residues 290-300 (APSKFAFLRSP) are cytoplasmic. Residues 301–321 (LTLIDLVAILPYYVTLLVDGA) traverse the membrane as a helical segment. Residues 322-338 (ASSRRKPSTGNSYLDKV) are Extracellular-facing. A helical; Voltage-sensor transmembrane segment spans residues 339 to 359 (GLVLRVLRALRILYVMRLARH). Topologically, residues 360–374 (SLGLQTLGLTARRCT) are cytoplasmic. Residues 375–396 (REFGLLLLFLCVAIALFAPLLY) form a helical membrane-spanning segment. The Extracellular portion of the chain corresponds to 397-411 (VIENEMADSPEFTSI). Positions 412–423 (PACYWWAVITMT) form an intramembrane region, helical. The short motif at 424–429 (TVGYGD) is the Selectivity filter element. The stretch at 424 to 431 (TVGYGDMV) is an intramembrane region. The Extracellular portion of the chain corresponds to 432-438 (PRSTPGQ). The chain crosses the membrane as a helical span at residues 439-467 (VVALSSILSGILLMAFPVTSIFHTFSRSY). The Cytoplasmic portion of the chain corresponds to 468-514 (LELKQEQERVLIRRAQYLIKTKSQLSGMSQDSDILFGSASSDTRDNN).

The protein belongs to the potassium channel family. G (TC 1.A.1.2) subfamily. Kv6.1/KCNG1 sub-subfamily. Heterotetramer with KCNB1 or KCNB2.

The protein resides in the cell membrane. Its function is as follows. Regulatory alpha-subunit of the voltage-gated potassium (Kv) channel which, when coassembled with KCNB1 or KCNB2, can modulate their expression and their gating kinetics by acting on deactivation upon repolarization and inactivation during maintained depolarization. Potassium channel subunit that does not form functional channels by itself. This is Voltage-gated potassium channel regulatory subunit KCNG1 from Mus musculus (Mouse).